The chain runs to 1562 residues: Neuralized-like protein 4 (1562 aa).

Gly residues predominate over residues 1–42 (MAAGSGGSGGSGGGPGPGPGGGGGPSGSGSGPGSNGGLGSGG). Disordered regions lie at residues 1–48 (MAAG…HPRT) and 207–236 (PEPGFSPPTPIPTPPLEPLAPTEDSALAEQ). NHR domains lie at 41 to 207 (GGEL…VLPP) and 317 to 484 (ALLF…IVHN). Over residues 207–224 (PEPGFSPPTPIPTPPLEP) the composition is skewed to pro residues. Ser-502 is subject to Phosphoserine. NHR domains follow at residues 520–686 (RLLF…IVDD) and 716–884 (DLRF…ITNA). A disordered region spans residues 691–716 (PVPEPLPEGNNQVSPSSPSSGAGGSD). At Ser-907 the chain carries Phosphoserine. Positions 913–1086 (AHRFHSTCGK…PVRGVSIVSS (174 aa)) constitute an NHR 5 domain. The tract at residues 1086-1123 (STRLEESEGTQPPSPSSDTGSEGEEDDEGEEHGLGGQN) is disordered. A compositionally biased stretch (acidic residues) spans 1106 to 1115 (SEGEEDDEGE). Residues 1131 to 1294 (TLEFLENHGK…QCEQVTIVNP (164 aa)) enclose the NHR 6 domain.

As to quaternary structure, interacts with CCP110; this interaction propmotes CCP110 ubiquitination and degradation via the proteasome pathway. Via its interaction with CCP110, may indirectly interact with CEP97. Interacts with the E3 ubiquitin-protein ligase HERC2 and UBE3A. May interact with MAPK6 and hence mediate MAPK6 interaction with UBE3A. Interaction with UBE3A may be indirect and mediated by HERC2. In terms of processing, ubiquitinated; undergoes HERC2-dependent 'Lys-48' ubiquitination. This ubiquitination leads to proteasomal degradation. As to expression, widely expressed at high levels (including brain).

It is found in the cytoplasm. The protein localises to the cytoskeleton. Its subcellular location is the microtubule organizing center. It localises to the centrosome. The protein resides in the centriole. Functionally, promotes CCP110 ubiquitination and proteasome-dependent degradation. By counteracting accumulation of CP110, maintains normal centriolar homeostasis and preventing formation of ectopic microtubular organizing centers. The chain is Neuralized-like protein 4 (NEURL4) from Homo sapiens (Human).